Consider the following 298-residue polypeptide: MAARRPSPPPASPPPPRPRSTTTTRTTSSASAAPAAAQRLVAMAGSGKFFVGGNWKCNGTKESISKLVSDLNAATLESDVDVVVAPPFIYIDQVKSSLTDRIEVSAQNTWIGKGGAFTGEISAEQLVDIGCQWVILGHSERRHVIGEDDEFIGKKAAYALSQNLKVMACIGELLEEREAGKTFDVCFKQMKAFADNITDWTNVVIAYEPVWAIGTGKVASPEQAQEVHAAVRDWLKTNVSADVASTVRIIYGGSVNAANCAELAKKEDIDGFLVGGASLKGPDFATICNSVTSKKVTA.

Residues 1-18 (MAARRPSPPPASPPPPRP) are compositionally biased toward pro residues. The segment at 1-32 (MAARRPSPPPASPPPPRPRSTTTTRTTSSASA) is disordered. A chloroplast-targeting transit peptide spans 1-43 (MAARRPSPPPASPPPPRPRSTTTTRTTSSASAAPAAAQRLVAM). Over residues 19–32 (RSTTTTRTTSSASA) the composition is skewed to low complexity. 2 residues coordinate substrate: Asn-54 and Lys-56. His-138 (electrophile) is an active-site residue. A Cysteine derivative modification is found at Cys-186. The Proton acceptor role is filled by Glu-208.

Belongs to the triosephosphate isomerase family. In terms of assembly, homodimer.

The protein resides in the plastid. The protein localises to the chloroplast. It carries out the reaction D-glyceraldehyde 3-phosphate = dihydroxyacetone phosphate. It participates in carbohydrate biosynthesis; Calvin cycle. This Secale cereale (Rye) protein is Triosephosphate isomerase, chloroplastic.